The chain runs to 273 residues: tRNA (guanine-N(7)-)-methyltransferase (273 aa).

Positions Met-1–Val-32 are disordered. Residues Gly-88, Glu-111 to Ile-112, Asn-150 to Cys-151, and Cys-170 contribute to the S-adenosyl-L-methionine site. The active site involves Asp-173. Thr-248–Glu-250 lines the S-adenosyl-L-methionine pocket.

Belongs to the class I-like SAM-binding methyltransferase superfamily. TrmB family. In terms of assembly, forms a complex with trm82.

Its subcellular location is the nucleus. It catalyses the reaction guanosine(46) in tRNA + S-adenosyl-L-methionine = N(7)-methylguanosine(46) in tRNA + S-adenosyl-L-homocysteine. The protein operates within tRNA modification; N(7)-methylguanine-tRNA biosynthesis. In terms of biological role, catalyzes the formation of N(7)-methylguanine at position 46 (m7G46) in tRNA. The protein is tRNA (guanine-N(7)-)-methyltransferase (trm8) of Schizosaccharomyces pombe (strain 972 / ATCC 24843) (Fission yeast).